The chain runs to 716 residues: Photosystem I P700 chlorophyll a apoprotein A1 (716 aa).

8 helical membrane passes run 57–80 (VFSA…FHGA), 143–166 (LYCT…FHYH), 182–206 (LNHH…HVSL), 278–296 (TVHH…GHMY), 333–356 (WHAQ…HHMY), 372–398 (LSLF…IFMV), 420–442 (AIIS…LYIH), and 518–536 (FLVH…LILL). [4Fe-4S] cluster is bound by residues Cys-560 and Cys-569. Transmembrane regions (helical) follow at residues 576-597 (HVFL…HFSW) and 651-673 (LSAY…MFLF). His-662 is a binding site for chlorophyll a'. The chlorophyll a site is built by Met-670 and Tyr-678. Phylloquinone is bound at residue Trp-679. Residues 711–716 (AVGVAH) form a helical membrane-spanning segment.

Belongs to the PsaA/PsaB family. As to quaternary structure, the PsaA/B heterodimer binds the P700 chlorophyll special pair and subsequent electron acceptors. PSI consists of a core antenna complex that captures photons, and an electron transfer chain that converts photonic excitation into a charge separation. The eukaryotic PSI reaction center is composed of at least 11 subunits. P700 is a chlorophyll a/chlorophyll a' dimer, A0 is one or more chlorophyll a, A1 is one or both phylloquinones and FX is a shared 4Fe-4S iron-sulfur center. serves as cofactor.

It localises to the plastid. The protein resides in the chloroplast thylakoid membrane. It carries out the reaction reduced [plastocyanin] + hnu + oxidized [2Fe-2S]-[ferredoxin] = oxidized [plastocyanin] + reduced [2Fe-2S]-[ferredoxin]. Functionally, psaA and PsaB bind P700, the primary electron donor of photosystem I (PSI), as well as the electron acceptors A0, A1 and FX. PSI is a plastocyanin-ferredoxin oxidoreductase, converting photonic excitation into a charge separation, which transfers an electron from the donor P700 chlorophyll pair to the spectroscopically characterized acceptors A0, A1, FX, FA and FB in turn. Oxidized P700 is reduced on the lumenal side of the thylakoid membrane by plastocyanin. This is Photosystem I P700 chlorophyll a apoprotein A1 from Araucaria araucana (Monkey-puzzle tree).